The following is a 270-amino-acid chain: Interleukin-1 alpha (270 aa).

Residues 1 to 112 (MAKVPDLFED…DTEEEIIKPR (112 aa)) constitute a propeptide that is removed on maturation. Lys-82 bears the N6-acetyllysine mark. Residues 82–86 (KKRRL) form a nuclear localization signal (NLS) region. A Phosphoserine modification is found at Ser-87. N-linked (GlcNAc...) asparagine glycosylation is found at Asn-102 and Asn-141.

The protein belongs to the IL-1 family. In terms of assembly, monomer. Interacts with TMED10; the interaction mediates the translocation from the cytoplasm into the ERGIC (endoplasmic reticulum-Golgi intermediate compartment) and thereby secretion. Interacts with IL1R1. Interacts with S100A13; this interaction is the first step in the export of IL1A, followed by direct translocation of this complex across the plasma membrane. Post-translationally, acetylated within its nuclear localization sequence, which impacts subcellular localization. In terms of processing, proteolytic processed by CAPN1 in a calcium-dependent manner. Cleavage from 31 kDa precursor to 18 kDa biologically active molecules. Phosphorylated. Phosphorylation greatly enhances susceptibility to digestion and promotes the conversion of pre-IL1A alpha to the biologically active IL1A.

It is found in the nucleus. Its subcellular location is the cytoplasm. It localises to the secreted. In terms of biological role, cytokine constitutively present intracellularly in nearly all resting non-hematopoietic cells that plays an important role in inflammation and bridges the innate and adaptive immune systems. After binding to its receptor IL1R1 together with its accessory protein IL1RAP, forms the high affinity interleukin-1 receptor complex. Signaling involves the recruitment of adapter molecules such as MYD88, IRAK1 or IRAK4. In turn, mediates the activation of NF-kappa-B and the three MAPK pathways p38, p42/p44 and JNK pathways. Within the cell, acts as an alarmin and cell death results in its liberation in the extracellular space after disruption of the cell membrane to induce inflammation and alert the host to injury or damage. In addition to its role as a danger signal, which occurs when the cytokine is passively released by cell necrosis, directly senses DNA damage and acts as signal for genotoxic stress without loss of cell integrity. In Sus scrofa (Pig), this protein is Interleukin-1 alpha (IL1A).